We begin with the raw amino-acid sequence, 339 residues long: mRNA cap guanine-N(7) methyltransferase 2 (339 aa).

The mRNA cap 0 methyltransferase domain maps to 1–277 (MAVTPHHRLY…LYSTFVFQKP (277 aa)). Residues Lys14, Asp54, and 82–83 (DP) contribute to the S-adenosyl-L-methionine site. The tract at residues 314-339 (VSRTDILPPADNEKGILGPGPADMRL) is disordered.

This sequence belongs to the class I-like SAM-binding methyltransferase superfamily. mRNA cap 0 methyltransferase family.

Its subcellular location is the nucleus. The enzyme catalyses a 5'-end (5'-triphosphoguanosine)-ribonucleoside in mRNA + S-adenosyl-L-methionine = a 5'-end (N(7)-methyl 5'-triphosphoguanosine)-ribonucleoside in mRNA + S-adenosyl-L-homocysteine. In terms of biological role, mRNA-capping methyltransferase that methylates the N7 position of the added guanosine to the 5'-cap structure of mRNAs. Binds RNA containing 5'-terminal GpppC. The protein is mRNA cap guanine-N(7) methyltransferase 2 of Oryza sativa subsp. japonica (Rice).